Consider the following 784-residue polypeptide: LPS-assembly protein LptD (784 aa).

The signal sequence occupies residues 1-24 (MKKRIPTLLATMIATALYSQQGLA). Disulfide bonds link Cys31/Cys724 and Cys173/Cys725.

Belongs to the LptD family. In terms of assembly, component of the lipopolysaccharide transport and assembly complex. Interacts with LptE and LptA. Contains two intramolecular disulfide bonds.

Its subcellular location is the cell outer membrane. Functionally, together with LptE, is involved in the assembly of lipopolysaccharide (LPS) at the surface of the outer membrane. The sequence is that of LPS-assembly protein LptD from Shigella flexneri serotype 5b (strain 8401).